Consider the following 839-residue polypeptide: Molybdenum cofactor sulfurase (839 aa).

Lys-237 bears the N6-(pyridoxal phosphate)lysine mark. Cys-401 is an active-site residue. The segment covering Asp-651–Met-662 has biased composition (polar residues). The segment at Asp-651–Thr-678 is disordered. The 179-residue stretch at Gln-656–Ser-834 folds into the MOSC domain.

Belongs to the class-V pyridoxal-phosphate-dependent aminotransferase family. MOCOS subfamily. Pyridoxal 5'-phosphate is required as a cofactor.

The enzyme catalyses Mo-molybdopterin + L-cysteine + AH2 = thio-Mo-molybdopterin + L-alanine + A + H2O. It participates in cofactor biosynthesis; molybdopterin biosynthesis. Sulfurates the molybdenum cofactor. Sulfation of molybdenum is essential for xanthine dehydrogenase (XDH) and aldehyde oxidase (ADO) enzymes in which molybdenum cofactor is liganded by 1 oxygen and 1 sulfur atom in active form. In Emericella nidulans (strain FGSC A4 / ATCC 38163 / CBS 112.46 / NRRL 194 / M139) (Aspergillus nidulans), this protein is Molybdenum cofactor sulfurase.